Consider the following 227-residue polypeptide: Phosphoribosylformylglycinamidine synthase subunit PurQ (227 aa).

A Glutamine amidotransferase type-1 domain is found at F3–V225. C86 functions as the Nucleophile in the catalytic mechanism. Active-site residues include H194 and E196.

As to quaternary structure, part of the FGAM synthase complex composed of 1 PurL, 1 PurQ and 2 PurS subunits.

The protein resides in the cytoplasm. It catalyses the reaction N(2)-formyl-N(1)-(5-phospho-beta-D-ribosyl)glycinamide + L-glutamine + ATP + H2O = 2-formamido-N(1)-(5-O-phospho-beta-D-ribosyl)acetamidine + L-glutamate + ADP + phosphate + H(+). It carries out the reaction L-glutamine + H2O = L-glutamate + NH4(+). Its pathway is purine metabolism; IMP biosynthesis via de novo pathway; 5-amino-1-(5-phospho-D-ribosyl)imidazole from N(2)-formyl-N(1)-(5-phospho-D-ribosyl)glycinamide: step 1/2. Functionally, part of the phosphoribosylformylglycinamidine synthase complex involved in the purines biosynthetic pathway. Catalyzes the ATP-dependent conversion of formylglycinamide ribonucleotide (FGAR) and glutamine to yield formylglycinamidine ribonucleotide (FGAM) and glutamate. The FGAM synthase complex is composed of three subunits. PurQ produces an ammonia molecule by converting glutamine to glutamate. PurL transfers the ammonia molecule to FGAR to form FGAM in an ATP-dependent manner. PurS interacts with PurQ and PurL and is thought to assist in the transfer of the ammonia molecule from PurQ to PurL. The polypeptide is Phosphoribosylformylglycinamidine synthase subunit PurQ (Bacillus cytotoxicus (strain DSM 22905 / CIP 110041 / 391-98 / NVH 391-98)).